Consider the following 984-residue polypeptide: Mineralocorticoid receptor (984 aa).

The modulating stretch occupies residues 1–602 (METKGYHSLP…STGSSRPSKI (602 aa)). The segment covering 231-243 (QGTPLTCSPNVEN) has biased composition (polar residues). Disordered stretches follow at residues 231-329 (QGTP…AAST) and 347-373 (GTSA…QEVP). A phosphoserine mark is found at serine 250, serine 259, serine 283, serine 287, and serine 299. A compositionally biased stretch (low complexity) spans 259-291 (SPLSSPLSSMKSSISSPPSHCSVKSPVSSPNNV). A compositionally biased stretch (polar residues) spans 292-329 (TLRSSVSSPANINNSRCSVSSPSNTNNRSTLSSPAAST). The Zn(2+) site is built by cysteine 603, cysteine 606, cysteine 620, cysteine 623, cysteine 639, cysteine 645, cysteine 655, and cysteine 658. 2 NR C4-type zinc fingers span residues 603 to 623 (CLVC…CGSC) and 639 to 663 (CAGR…LQKC). Positions 603–668 (CLVCGDEASG…RLQKCLQAGM (66 aa)) form a DNA-binding region, nuclear receptor. Residues 669 to 725 (NLGARKSKKLGKLKGIHEEQPQQQQPPPPPPPPQSPEEGTTYIAPAKEPSVNTALVP) form a hinge region. The tract at residues 684-710 (IHEEQPQQQQPPPPPPPPQSPEEGTTY) is disordered. Residues 692-703 (QQPPPPPPPPQS) show a composition bias toward pro residues. Residues 726 to 964 (QLSTISRALT…EFPAMLVEII (239 aa)) form the NR LBD domain. 21-hydroxyprogesterone is bound by residues asparagine 770 and glutamine 776. Residues asparagine 770 and glutamine 776 each contribute to the aldosterone site. Residues asparagine 770 and glutamine 776 each coordinate progesterone. Residues 782 to 785 (KWAK) are important for coactivator binding. 21-hydroxyprogesterone-binding residues include arginine 817 and threonine 945. 2 residues coordinate aldosterone: arginine 817 and threonine 945. Progesterone contacts are provided by arginine 817 and threonine 945.

The protein belongs to the nuclear hormone receptor family. NR3 subfamily. As to quaternary structure, heteromultimeric cytoplasmic complex with HSP90, HSP70, and FKBP4, in the absence of ligand. After ligand binding, it translocates to the nucleus and binds to DNA as a homodimer and as a heterodimer with NR3C1. May interact with HSD11B2 in the absence of ligand. Binds the coactivators NCOA1, NCOA2, TIF1 and NRIP1. Phosphorylated. As to expression, ubiquitous. Highly expressed in distal tubules, convoluted tubules and cortical collecting duct in kidney, and in sweat glands. Detected at lower levels in cardiomyocytes, in epidermis and in colon enterocytes.

The protein resides in the cytoplasm. It localises to the nucleus. The protein localises to the endoplasmic reticulum membrane. Its function is as follows. Receptor for both mineralocorticoids (MC) such as aldosterone and glucocorticoids (GC) such as corticosterone or cortisol. Binds to mineralocorticoid response elements (MRE) and transactivates target genes. The effect of MC is to increase ion and water transport and thus raise extracellular fluid volume and blood pressure and lower potassium levels. The polypeptide is Mineralocorticoid receptor (NR3C2) (Homo sapiens (Human)).